The chain runs to 183 residues: ATP synthase subunit delta (183 aa).

This sequence belongs to the ATPase delta chain family. F-type ATPases have 2 components, F(1) - the catalytic core - and F(0) - the membrane proton channel. F(1) has five subunits: alpha(3), beta(3), gamma(1), delta(1), epsilon(1). F(0) has three main subunits: a(1), b(2) and c(10-14). The alpha and beta chains form an alternating ring which encloses part of the gamma chain. F(1) is attached to F(0) by a central stalk formed by the gamma and epsilon chains, while a peripheral stalk is formed by the delta and b chains.

It localises to the cell membrane. Functionally, f(1)F(0) ATP synthase produces ATP from ADP in the presence of a proton or sodium gradient. F-type ATPases consist of two structural domains, F(1) containing the extramembraneous catalytic core and F(0) containing the membrane proton channel, linked together by a central stalk and a peripheral stalk. During catalysis, ATP synthesis in the catalytic domain of F(1) is coupled via a rotary mechanism of the central stalk subunits to proton translocation. In terms of biological role, this protein is part of the stalk that links CF(0) to CF(1). It either transmits conformational changes from CF(0) to CF(1) or is implicated in proton conduction. This chain is ATP synthase subunit delta, found in Mesoplasma florum (strain ATCC 33453 / NBRC 100688 / NCTC 11704 / L1) (Acholeplasma florum).